Consider the following 385-residue polypeptide: Protein-glutamate methylesterase/protein-glutamine glutaminase (385 aa).

The residue at position 53 (aspartate 53) is a 4-aspartylphosphate. The CheB-type methylesterase domain occupies lysine 196 to serine 385. Residues serine 208, histidine 234, and aspartate 330 contribute to the active site.

This sequence belongs to the CheB family. Phosphorylated by CheA. Phosphorylation of the N-terminal regulatory domain activates the methylesterase activity.

It localises to the cytoplasm. It carries out the reaction [protein]-L-glutamate 5-O-methyl ester + H2O = L-glutamyl-[protein] + methanol + H(+). The catalysed reaction is L-glutaminyl-[protein] + H2O = L-glutamyl-[protein] + NH4(+). In terms of biological role, involved in chemotaxis. Part of a chemotaxis signal transduction system that modulates chemotaxis in response to various stimuli. Catalyzes the demethylation of specific methylglutamate residues introduced into the chemoreceptors (methyl-accepting chemotaxis proteins or MCP) by CheR. Also mediates the irreversible deamidation of specific glutamine residues to glutamic acid. In Borreliella burgdorferi (strain ATCC 35210 / DSM 4680 / CIP 102532 / B31) (Borrelia burgdorferi), this protein is Protein-glutamate methylesterase/protein-glutamine glutaminase.